We begin with the raw amino-acid sequence, 294 residues long: Formate dehydrogenase, nitrate-inducible, iron-sulfur subunit (294 aa).

At 1–256 the chain is on the periplasmic side; it reads MAMETQDIIK…DTSVSLWKGA (256 aa). 4Fe-4S ferredoxin-type domains follow at residues 30 to 58, 91 to 123, 124 to 153, and 158 to 189; these read VAKL…IRDE, LEWL…QYAN, GIVD…LNKE, and YKCT…FGTK. [4Fe-4S] cluster contacts are provided by C39, C42, C45, C49, C100, C103, C108, C112, C133, C136, C139, C143, C160, C163, C175, and C179. A helical transmembrane segment spans residues 257 to 279; sequence LKPLAAAGFIATFAGLIFHYIGI. Residues 280–294 lie on the Cytoplasmic side of the membrane; sequence GPNKEVDDDEEDHHE.

As to quaternary structure, trimer of heterotrimers, consisting of subunits alpha, beta and gamma. [4Fe-4S] cluster is required as a cofactor.

It is found in the cell inner membrane. Functionally, formate dehydrogenase allows E.coli to use formate as major electron donor during anaerobic respiration, when nitrate is used as electron acceptor. The beta subunit FdnH is an electron transfer unit containing 4 iron-sulfur clusters; it serves as a conduit for electrons that are transferred from the formate oxidation site in the alpha subunit (FdnG) to the menaquinone associated with the gamma subunit (FdnI) of formate dehydrogenase-N. Formate dehydrogenase-N is part of a system that generates proton motive force, together with the dissimilatory nitrate reductase (Nar). This chain is Formate dehydrogenase, nitrate-inducible, iron-sulfur subunit (fdnH), found in Escherichia coli (strain K12).